A 467-amino-acid chain; its full sequence is Methylenetetrahydrofolate--tRNA-(uracil-5-)-methyltransferase TrmFO (467 aa).

FAD is bound at residue 10-15; sequence GGGMAG.

Belongs to the MnmG family. TrmFO subfamily. Requires FAD as cofactor.

The protein localises to the cytoplasm. It carries out the reaction uridine(54) in tRNA + (6R)-5,10-methylene-5,6,7,8-tetrahydrofolate + NADH + H(+) = 5-methyluridine(54) in tRNA + (6S)-5,6,7,8-tetrahydrofolate + NAD(+). The catalysed reaction is uridine(54) in tRNA + (6R)-5,10-methylene-5,6,7,8-tetrahydrofolate + NADPH + H(+) = 5-methyluridine(54) in tRNA + (6S)-5,6,7,8-tetrahydrofolate + NADP(+). Catalyzes the folate-dependent formation of 5-methyl-uridine at position 54 (M-5-U54) in all tRNAs. The polypeptide is Methylenetetrahydrofolate--tRNA-(uracil-5-)-methyltransferase TrmFO (Hyphomonas neptunium (strain ATCC 15444)).